Reading from the N-terminus, the 253-residue chain is Small ribosomal subunit protein cS22 (253 aa).

The transit peptide at 1–56 (MATFLTNVVSIKPTIFSFQSESFTPLHTRVNVFSSKPFPSLAGTFSRSSRTRFIPY) directs the protein to the chloroplast. RRM domains are found at residues 76-154 (RRVY…ITEK) and 177-253 (YKVY…VNKA).

It belongs to the chloroplast-specific ribosomal protein cS22 family. Component of the chloroplast small ribosomal subunit (SSU). Mature 70S chloroplast ribosomes of higher plants consist of a small (30S) and a large (50S) subunit. The 30S small subunit contains 1 molecule of ribosomal RNA (16S rRNA) and 24 different proteins. The 50S large subunit contains 3 rRNA molecules (23S, 5S and 4.5S rRNA) and 33 different proteins. In terms of tissue distribution, expressed constitutively in roots, stems, flower buds, flowers and leaves.

It localises to the plastid. It is found in the chloroplast. Its function is as follows. Component of the chloroplast ribosome (chloro-ribosome), a dedicated translation machinery responsible for the synthesis of chloroplast genome-encoded proteins, including proteins of the transcription and translation machinery and components of the photosynthetic apparatus. May have a role in the recruitment of stored chloroplast mRNAs for active protein synthesis. Bind single strand DNA (ssDNA) and RNA in vitro. Exhibits RNA chaperone activity. Negatively regulates resistance responses to abiotic stresses during seed germination (e.g. salt, dehydration, and low temperature) and seedling growth (e.g. salt). This Arabidopsis thaliana (Mouse-ear cress) protein is Small ribosomal subunit protein cS22.